Consider the following 488-residue polypeptide: Ribulose bisphosphate carboxylase large chain (488 aa).

Substrate is bound by residues asparagine 127 and threonine 177. Lysine 179 (proton acceptor) is an active-site residue. Residue lysine 181 coordinates substrate. The Mg(2+) site is built by lysine 205, aspartate 207, and glutamate 208. Lysine 205 is subject to N6-carboxylysine. The active-site Proton acceptor is the histidine 297. Substrate contacts are provided by arginine 298, histidine 330, and serine 382.

This sequence belongs to the RuBisCO large chain family. Type I subfamily. Heterohexadecamer of 8 large chains and 8 small chains. Mg(2+) is required as a cofactor.

Its subcellular location is the plastid. It is found in the chloroplast. The catalysed reaction is 2 (2R)-3-phosphoglycerate + 2 H(+) = D-ribulose 1,5-bisphosphate + CO2 + H2O. The enzyme catalyses D-ribulose 1,5-bisphosphate + O2 = 2-phosphoglycolate + (2R)-3-phosphoglycerate + 2 H(+). In terms of biological role, ruBisCO catalyzes two reactions: the carboxylation of D-ribulose 1,5-bisphosphate, the primary event in carbon dioxide fixation, as well as the oxidative fragmentation of the pentose substrate in the photorespiration process. Both reactions occur simultaneously and in competition at the same active site. This chain is Ribulose bisphosphate carboxylase large chain, found in Gracilaria tenuistipitata var. liui (Red alga).